Here is a 352-residue protein sequence, read N- to C-terminus: Nuclear receptor subfamily 1 group I member 3 (352 aa).

A DNA-binding region (nuclear receptor) is located at residues 8 to 83; sequence LRNCVVCGDQ…AGMRKDMILS (76 aa). An NR C4-type zinc finger spans residues 11-31; that stretch reads CVVCGDQATGYHFNALTCEGC. Residue Thr38 is modified to Phosphothreonine; by PKC. The segment at 47-71 adopts an NR C4-type zinc-finger fold; sequence CPFAGSCEVSKIQRRHCPACRLQKC. The region spanning 109 to 352 is the NR LBD domain; the sequence is EQEELIQTLL…MMPLLQEICS (244 aa).

The protein belongs to the nuclear hormone receptor family. NR1 subfamily. Heterodimer of NR1I3 and RXR. Interacts with PSMC4. Interacts with ECT2. Directly interacts with DNAJC7; this complex may also include HSP90. Interacts with CRY1. Interacts with CRY2 in a ligand-dependent manner. In terms of processing, phosphorylated at Thr-38 by PKC, dephosphorylation of Thr-38 is required for nuclear translocation and activation.

It localises to the nucleus. It is found in the cytoplasm. The protein localises to the cytoskeleton. Its function is as follows. Binds and transactivates the retinoic acid response elements that control expression of the retinoic acid receptor beta 2 and alcohol dehydrogenase 3 genes. Transactivates both the phenobarbital responsive element module of the human CYP2B6 gene and the CYP3A4 xenobiotic response element. The polypeptide is Nuclear receptor subfamily 1 group I member 3 (NR1I3) (Macaca mulatta (Rhesus macaque)).